A 406-amino-acid chain; its full sequence is Proteasome-activating nucleotidase 1 (406 aa).

The stretch at 13–72 forms a coiled coil; sequence YDKDSASQQEKITALQERLEVLETQNEEMRDKLLDTNAENNKYQQKLERLTHENKKLKQS. ATP-binding positions include 194–199 and H333; that span reads GTGKTM. The interval 404–406 is docks into pockets in the proteasome alpha-ring to cause gate opening; sequence AFA.

It belongs to the AAA ATPase family. As to quaternary structure, homododecamer, in a proposed two stacked hexameric ring configuration, but may also form homohexamer. The hexameric complex has likely a two-ring architecture resembling a top hat that caps the 20S proteasome core at one or both ends. Upon ATP-binding, the C-terminus of PAN probably interacts with the alpha-rings of the proteasome core by binding to the intersubunit pockets. Interacts with SAMP1-MoaE conjugate in vitro, but does not bind to SAMP1 or MoaE alone. Interacts with NcsA.

Its subcellular location is the cytoplasm. ATPase activity is inhibited by EDTA in vitro. In terms of biological role, ATPase which is responsible for recognizing, binding, unfolding and translocation of substrate proteins into the archaeal 20S proteasome core particle. Is essential for opening the gate of the 20S proteasome via an interaction with its C-terminus, thereby allowing substrate entry and access to the site of proteolysis. Thus, the C-terminus of the proteasomal ATPase functions like a 'key in a lock' to induce gate opening and therefore regulate proteolysis. Unfolding activity requires energy from ATP hydrolysis, whereas ATP binding alone promotes ATPase-20S proteasome association which triggers gate opening, and supports translocation of unfolded substrates. Is also able to cleave other nucleoside triphosphates including GTP and TTP, but the rate of hydrolysis is 4- to 5-fold slower than for ATP. The sequence is that of Proteasome-activating nucleotidase 1 from Haloferax volcanii (strain ATCC 29605 / DSM 3757 / JCM 8879 / NBRC 14742 / NCIMB 2012 / VKM B-1768 / DS2) (Halobacterium volcanii).